Reading from the N-terminus, the 725-residue chain is Fatty acid oxidation complex subunit alpha (725 aa).

The segment at 1–189 (MIYQGENLSV…ALGMIDGVVS (189 aa)) is enoyl-CoA hydratase/isomerase. Position 296 (Asp-296) interacts with substrate. The segment at 311–725 (EPVTSAAVLG…APQSLSAPSA (415 aa)) is 3-hydroxyacyl-CoA dehydrogenase. Residues Met-324, Asp-343, 400-402 (VVE), Lys-407, and Ser-429 contribute to the NAD(+) site. The active-site For 3-hydroxyacyl-CoA dehydrogenase activity is His-450. Asn-453 lines the NAD(+) pocket. Substrate-binding residues include Asn-500 and Tyr-660.

It in the N-terminal section; belongs to the enoyl-CoA hydratase/isomerase family. This sequence in the C-terminal section; belongs to the 3-hydroxyacyl-CoA dehydrogenase family. In terms of assembly, heterotetramer of two alpha chains (FadB) and two beta chains (FadA).

The catalysed reaction is a (3S)-3-hydroxyacyl-CoA + NAD(+) = a 3-oxoacyl-CoA + NADH + H(+). It catalyses the reaction a (3S)-3-hydroxyacyl-CoA = a (2E)-enoyl-CoA + H2O. The enzyme catalyses a 4-saturated-(3S)-3-hydroxyacyl-CoA = a (3E)-enoyl-CoA + H2O. It carries out the reaction (3S)-3-hydroxybutanoyl-CoA = (3R)-3-hydroxybutanoyl-CoA. The catalysed reaction is a (3Z)-enoyl-CoA = a 4-saturated (2E)-enoyl-CoA. It catalyses the reaction a (3E)-enoyl-CoA = a 4-saturated (2E)-enoyl-CoA. It participates in lipid metabolism; fatty acid beta-oxidation. In terms of biological role, involved in the aerobic and anaerobic degradation of long-chain fatty acids via beta-oxidation cycle. Catalyzes the formation of 3-oxoacyl-CoA from enoyl-CoA via L-3-hydroxyacyl-CoA. It can also use D-3-hydroxyacyl-CoA and cis-3-enoyl-CoA as substrate. The chain is Fatty acid oxidation complex subunit alpha from Aliivibrio fischeri (strain MJ11) (Vibrio fischeri).